The sequence spans 188 residues: Adenine phosphoribosyltransferase (188 aa).

The protein belongs to the purine/pyrimidine phosphoribosyltransferase family. In terms of assembly, homodimer.

The protein localises to the cytoplasm. It catalyses the reaction AMP + diphosphate = 5-phospho-alpha-D-ribose 1-diphosphate + adenine. The protein operates within purine metabolism; AMP biosynthesis via salvage pathway; AMP from adenine: step 1/1. In terms of biological role, catalyzes a salvage reaction resulting in the formation of AMP, that is energically less costly than de novo synthesis. In Salinispora arenicola (strain CNS-205), this protein is Adenine phosphoribosyltransferase.